The following is a 226-amino-acid chain: uncharacterized protein (226 aa).

The first 18 residues, 1 to 18 (MRRIGLCISLLVTVLVMS), serve as a signal peptide directing secretion.

This is an uncharacterized protein from Bacillus subtilis (strain 168).